The primary structure comprises 1013 residues: PHD finger protein 20-like protein 1 (1013 aa).

The 61-residue stretch at 11 to 71 folds into the Tudor 1 domain; sequence ITFEIGARLE…SNRLRPLERP (61 aa). Residues Lys75 and Lys79 each participate in a glycyl lysine isopeptide (Lys-Gly) (interchain with G-Cter in SUMO2) cross-link. The Tudor 2 domain maps to 85–141; it reads FDFKAGEEVLARWTDCRYYPAKIEAINKEGTFTVQFYDGVIRCLKRMHIKAMPEDAK. Disordered regions lie at residues 183-206, 309-368, 389-454, and 482-511; these read AKNK…RDGG, EQAI…TPKS, VINK…QSSV, and VTGS…FANP. The span at 315 to 346 shows a compositional bias: polar residues; that stretch reads KPQSQKKNEAVISSSANTQKPALLSSTLSSGK. Ser368 is modified (phosphoserine). Positions 404–415 are enriched in basic residues; that stretch reads PCKHSERRRRSQ. Residue Ser432 is modified to Phosphoserine. A compositionally biased stretch (low complexity) spans 443-453; that stretch reads SISSQNQQQSS. The segment covering 496 to 505 has biased composition (basic and acidic residues); sequence ECPREEKEET. A Glycyl lysine isopeptide (Lys-Gly) (interchain with G-Cter in SUMO2) cross-link involves residue Lys530. The span at 533–565 shows a compositional bias: basic and acidic residues; that stretch reads KKVKLEEKTSTAFGKRKEKDKEKKEKRDKDHYK. The disordered stretch occupies residues 533-585; sequence KKVKLEEKTSTAFGKRKEKDKEKKEKRDKDHYKPKQKKKKKKKKKSKQHDYSD. Basic residues predominate over residues 566 to 579; the sequence is PKQKKKKKKKKKSK. The PHD-type zinc-finger motif lies at 681-729; that stretch reads IVRCICELDEENGFMIQCEECLCWQHSVCMGLLEDSIPEQYICYICRDP. The segment covering 824–852 has biased composition (basic and acidic residues); that stretch reads RKITPQDRANSEGKECVQNHKEPALRMEE. The interval 824–911 is disordered; that stretch reads RKITPQDRAN…LLYKNRGVSE (88 aa). Residues 854-878 show a composition bias toward polar residues; the sequence is YITSEHSYQKPQSFSQDCQSLTDPG. Positions 879-892 are enriched in acidic residues; the sequence is SSDDDDASSFEEDG. N6-acetyllysine is present on Lys905.

As to quaternary structure, interacts with methylated DNMT1 (DNMT1K142me1). Interacts with SOX2.

It localises to the nucleus. Its function is as follows. Is a negative regulator of proteasomal degradation of a set of methylated proteins, including DNMT1 and SOX2. Involved in the maintainance of embryonic stem cells pluripotency, through the regulation of SOX2 levels. The chain is PHD finger protein 20-like protein 1 (Phf20l1) from Mus musculus (Mouse).